The chain runs to 128 residues: Lymphocyte antigen 6D (128 aa).

The signal sequence occupies residues 1-20 (MKTVLLFLVALAAAAGPAQA). In terms of domain architecture, UPAR/Ly6 spans 21–108 (LRCHVCTSSS…WQSAAPARTS (88 aa)). Disulfide bonds link cysteine 23–cysteine 45, cysteine 26–cysteine 32, cysteine 38–cysteine 63, cysteine 67–cysteine 86, and cysteine 87–cysteine 92. Serine 98 carries GPI-anchor amidated serine lipidation. The propeptide at 99-128 (WQSAAPARTSAHLGLALACGLLALLWAPGL) is removed in mature form.

The protein localises to the cell membrane. May act as a specification marker at earliest stage specification of lymphocytes between B- and T-cell development. Marks the earliest stage of B-cell specification. The protein is Lymphocyte antigen 6D (LY6D) of Bos taurus (Bovine).